The following is a 145-amino-acid chain: Photosystem I reaction center subunit VI-2, chloroplastic (145 aa).

The transit peptide at 1–50 (MASFATIAAVQPSAAVKGLGGSSLAGAKLFIKPSRQSFKTKSTRAGAVVA) directs the protein to the chloroplast. Residues 102-118 (LLLKFLILGGGSLLTYV) form a helical membrane-spanning segment. A disordered region spans residues 126 to 145 (VLPIKRGPQEPPKLGPRGKL).

The protein belongs to the psaH family.

The protein resides in the plastid. It is found in the chloroplast thylakoid membrane. Functionally, possible role could be the docking of the LHC I antenna complex to the core complex. The polypeptide is Photosystem I reaction center subunit VI-2, chloroplastic (PSAH2) (Arabidopsis thaliana (Mouse-ear cress)).